Here is a 593-residue protein sequence, read N- to C-terminus: Vicilin Jug r 2.0101 (593 aa).

2 stretches are compositionally biased toward basic and acidic residues: residues 46–76 and 97–118; these read LEEDQRSQEERERRRGRDVDDQNPRDPEQRY and RRCEQRRQQEERERQRGRDRQD. Residues 46 to 123 form a disordered region; sequence LEEDQRSQEE…RDRQDPQQQY (78 aa). IgE-binding stretches follow at residues 49 to 58, 76 to 85, and 101 to 110; these read DQRSQEERER, YEQCQQQCER, and QRRQQEERER. The tract at residues 140–149 is igE-binding. Involved in cross-reactivity with peanut allergen Ara h 2; able to inhibit binding of IgE from a peanut-allergic patient to Ara h 2; sequence QRQCQQRCER. The span at 150–178 shows a compositional bias: basic and acidic residues; the sequence is QYKEQQGRERGPEASPRRESRGREEEQQR. The interval 150-184 is disordered; the sequence is QYKEQQGRERGPEASPRRESRGREEEQQRHNPYYF. T-cell epitope; recognized by the HLA-DRB1-restricted CD4(+) T-cells regions lie at residues 175 to 193 and 206 to 225; these read EQQRHNPYYFHSQSIRSRH and FTERTELLRGIENYRVVILD. Tyrosine 182 provides a ligand contact to Cu cation. Cupin type-1 domains follow at residues 187-341 and 386-556; these read QSIR…DRLE and ISLK…EEIE. Asparagine 229 is a glycosylation site (N-linked (GlcNAc...) asparagine). T-cell epitope; recognized by the HLA-DRB1-restricted CD4(+) T-cells regions lie at residues 246-265, 302-321, 318-337, 382-401, 414-433, and 438-457; these read TRGRATLTLVSQETRESFNL, PGQFREYYAAGAKSPDQSYL, QSYLRVFSNDILVAALNTPR, SGGPISLKSESPSYSNQFGQ, QEMDVLVNYAEIKRGAMMVP, and KATVVVYVVEGTGRYEMACP. 2 residues coordinate Cu cation: cysteine 456 and histidine 458. Residues 463–470 form an igE-binding region; that stretch reads SYEGQGRR. The interval 478–497 is T-cell epitope; recognized by the HLA-DRB1-restricted CD4(+) T-cells; sequence TGRFQKVTARLARGDIFVIP. Histidine 500 serves as a coordination point for Cu cation. The stretch at 529 to 556 forms a coiled coil; sequence LAGQNNIINQLEREAKELSFNMPREEIE. The igE-binding stretch occupies residues 541-555; that stretch reads REAKELSFNMPREEI. 2 T-cell epitope; recognized by the HLA-DRB1-restricted CD4(+) T-cells regions span residues 542 to 561 and 558 to 577; these read EAKELSFNMPREEIEEIFES and IFESQMESYFVPTERQSRRG.

The protein belongs to the 7S seed storage protein family. Post-translationally, proteolytically cleaved. As to expression, expressed in seed (at protein level).

Functionally, seed storage protein. This Juglans regia (English walnut) protein is Vicilin Jug r 2.0101.